The following is a 1365-amino-acid chain: MRLLALVLLLLCAPLRAWTYSLRYGIPESAQVWSILVHLLGDVDNQLLTNLYPLVTGLDDEIDIQENLVALTSNVLRERYDKEDVADLLELYASLYPMGMIQHDISSNAEQDDANSSYFVLNGNRYEKPDDVFYLKSKDLTIQQKVPDVDVIQPYDVVIGTNSEAPILILYGCPTVIDSDFEEFNRNLFMEAMNGEGKFRFIWRSTCSLDGKSVEYPLTHPLEITLQNGSRMSSIPQLKKILYTVPKEILVGADNDDQLHDLEPEELRELDLRVTSLISEFYQYKKDITATLNFTKSIVNNFPLISKQLIKVSSVNKDIITSNEELNSKGFDYNMLGLYINGQNWKITSLTPYNLLTALKTEYQSLLKITNLLQELEPSKCILDSKFLLNKFSQFSLGKLQNLQPIKMDLHTIPGFSESVIYFNDIESDPQYDELVNSVQAFFDKSKFGELPEIKQNWSEIIFVIDFARLEDSEVKEALGGLVRAVNVVSQGYPQRVGLLPFSSDSDKSVVNKIYELKNSTDNLTELKSFLETMLLADGLSANAKHSKHIPVPDVFHLLDELQIDETSIIINGEIYPFRKNAWNYLIAKVIKKDTEFIRKELSNSSPKNKQISVRDLLHYKSANLRHNKYTPNYFADSVYSSVNNTALESVCSERIGYYTKNEEYNLLHTITLVDDFGSIHALKRLRNLLHTSFVGVRIRIIHVGDISDIWYQLRGSLSQKDPIGSINTFIDALKLKKVKSHTYKKSGLNQLGLHKWLPDIPLFELQKGSFIALNGRFIHLDQNEVPETEHFEAIIKREALRTIDSVFALDLLFPGFSQEIINPDLIEMISSILTRLFYQGTHIYNNGIDYTTESSLPRMDLSEFFRPNNLTMFEDGKSASIDLLLILDPLEERTQMILSLVEQFRPLKFVNIQVILMPTLELNIVPIRRIYVDDADIVKSITSEDSRSDPEVDIEMDVPNSFIVDNNYRIKKLLIELHSFSSKTVLSTGNIDGMGGVCLALVDSAGNIIDKTTTMKTFGYGQFHTDKFLKGCYIKSCDSRYTVQSFSTDGHPDFIPSDSLDILSYNPQKIAVKISEEPTHEEEYEEGRNNDTIINIFTILESGPDEEERYMQMILSILSKCPETQKVNFFILDQPFISDTLRKSCEYINSSDEMRGNVIFLNYEWPQWLRPQRFSSRRRDVSRFLFLDVLLPQNISKVLYMSPTEVPLDPFDIFQFQGLKRAPLGLFRMSGDGYWKEGYWEKMLRENNLEFYSTEPAFLVNLERFRELDAGDKYRIHYQRISTDAMSLVNIGQDLVNNLQLEVPIRFLKGSYKKKLVINDECVSEWKKKINKFASSPGDEDVPGESVSSKYQDSDNAAPLHDEL.

The signal sequence occupies residues 1-17 (MRLLALVLLLLCAPLRA). Residues asparagine 115, asparagine 228, asparagine 293, asparagine 457, asparagine 519, asparagine 523, asparagine 644, asparagine 870, asparagine 1091, asparagine 1150, and asparagine 1195 are each glycosylated (N-linked (GlcNAc...) asparagine). The segment at 1334-1365 (FASSPGDEDVPGESVSSKYQDSDNAAPLHDEL) is disordered. A compositionally biased stretch (polar residues) spans 1347–1356 (SVSSKYQDSD). Residues 1362-1365 (HDEL) carry the Prevents secretion from ER motif.

This sequence to D.melanogaster UGGG.

It localises to the endoplasmic reticulum lumen. In terms of biological role, required for (1-&gt;6)-beta-D-glucan synthesis and normal cell growth. The polypeptide is Killer toxin-resistance protein 5 (KRE5) (Saccharomyces cerevisiae (strain ATCC 204508 / S288c) (Baker's yeast)).